Reading from the N-terminus, the 372-residue chain is Pre-small/secreted glycoprotein (372 aa).

A signal peptide spans 1-32; that stretch reads MEGLSLLQLPRDKFRKSSFFVWVIILFQKAFS. Asn40 carries an N-linked (GlcNAc...) asparagine; by host glycan. Cystine bridges form between Cys108–Cys135 and Cys121–Cys147. Residues Asn204, Asn208, Asn238, Asn257, and Asn268 are each glycosylated (N-linked (GlcNAc...) asparagine; by host). The interval 320-340 is disordered; the sequence is MRHRRELQREESPTGPPGSIR.

Belongs to the filoviruses glycoprotein family. Homodimer; disulfide-linked. The homodimers are linked by two disulfide bonds in a parallel orientation. As to quaternary structure, monomer. This precursor is processed into mature sGP and delta-peptide by host furin or furin-like proteases. The cleavage site corresponds to the furin optimal cleavage sequence [KR]-X-[KR]-R. In terms of processing, N-glycosylated. Post-translationally, O-glycosylated.

It localises to the secreted. Its function is as follows. Seems to possess an anti-inflammatory activity as it can reverse the barrier-decreasing effects of TNF alpha. Might therefore contribute to the lack of inflammatory reaction seen during infection in spite the of extensive necrosis and massive virus production. Does not seem to be involved in activation of primary macrophages. Does not seem to interact specifically with neutrophils. In terms of biological role, viroporin that permeabilizes mammalian cell plasma membranes. It acts by altering permeation of ionic compounds and small molecules. This activity may lead to viral enterotoxic activity. The sequence is that of Pre-small/secreted glycoprotein (GP) from Sudan ebolavirus (strain Boniface-76) (SEBOV).